We begin with the raw amino-acid sequence, 510 residues long: G-protein coupled receptor dmsr-1 (510 aa).

The Extracellular portion of the chain corresponds to 1-35; that stretch reads MEFTECKTTFIHLPDKSFLYDVFVSVYNFYHPIHA. The helical transmembrane segment at 36 to 56 threads the bilayer; sequence YLSIFLCVLGTIANFCNIVVL. Residues 57 to 64 lie on the Cytoplasmic side of the membrane; it reads TRRTMRTP. The chain crosses the membrane as a helical span at residues 65 to 85; sequence VNMILTAMASCDTVVLFSNLI. At 86-107 the chain is on the extracellular side; the sequence is YTTHYSFVAFKFCHPKHWSYSW. A helical membrane pass occupies residues 108-128; it reads ALFLIAHAHLSLVAHSSSVWL. Residues 129 to 155 are Cytoplasmic-facing; the sequence is SVMLALVRYVTLRSRGNMGGMQVTLRH. The chain crosses the membrane as a helical span at residues 156-176; that stretch reads SYYAVAVTVSLVAVLNAPNFL. At 177–223 the chain is on the extracellular side; sequence NYKINEQPLNETCTDLDPMFWNSPAYLPGIADIAKANSCLVFRLSYW. The N-linked (GlcNAc...) asparagine glycan is linked to N186. The chain crosses the membrane as a helical span at residues 224-244; the sequence is ISGMVFKVLPCALLSLFVWLL. Topologically, residues 245–307 are cytoplasmic; that stretch reads LRILREVREN…GERVDRTTHM (63 aa). A helical transmembrane segment spans residues 308–328; the sequence is LLAIVAVMLVTELPQGIMAVL. Residues 329–343 are Extracellular-facing; it reads SGMCSEEFRIYIYNN. The helical transmembrane segment at 344 to 364 threads the bilayer; that stretch reads LGDILDLFSLCGSCCSFIIYC. The Cytoplasmic segment spans residues 365-510; that stretch reads SMSGQFRNEF…DGIRGHFQNI (146 aa). The interval 452–510 is disordered; sequence GCDSITPCSPMPTSFPSSPLPPIRSGEDESTDETSHLLNSSGPNSTASADGIRGHFQNI. Polar residues predominate over residues 487–499; it reads HLLNSSGPNSTAS.

The protein belongs to the G-protein coupled receptor 1 family. In terms of tissue distribution, expressed in head neurons including the RID neuron and the paired AIY neurons, and in tail neurons including the paired PHA and PHB neurons. Not expressed in AVE and AVA neurons.

Its subcellular location is the cell membrane. Functionally, G-protein coupled receptor. In terms of biological role, G-protein coupled receptor for flp-13 RFamide neuropeptides in vitro. Upon activation by flp-13 RFamide neuropeptides, promotes sleep in response to cellular stress also known as stress-induced sleep (SIS), probably by inhibiting the activity of wake-promoting neurons. In Caenorhabditis elegans, this protein is G-protein coupled receptor dmsr-1.